The chain runs to 272 residues: tRNA pseudouridine synthase B (272 aa).

The active-site Nucleophile is Asp38.

This sequence belongs to the pseudouridine synthase TruB family. Type 1 subfamily.

The catalysed reaction is uridine(55) in tRNA = pseudouridine(55) in tRNA. Its function is as follows. Responsible for synthesis of pseudouridine from uracil-55 in the psi GC loop of transfer RNAs. The protein is tRNA pseudouridine synthase B of Campylobacter jejuni (strain RM1221).